The following is a 543-amino-acid chain: Acrosin-binding protein (543 aa).

A signal peptide spans 1–25 (MRKPAAGFLPSLLKVLLLPLAPAAA). The interval 26-106 (QDSTQASTPG…ASWFESFCQF (81 aa)) is pro-ACR binding. Positions 26–273 (QDSTQASTPG…NPSSFAPRVR (248 aa)) are cleaved as a propeptide — removed in mature form. Positions 185–272 (SLGGQEQAPE…SNPSSFAPRV (88 aa)) are disordered. Residues 192 to 220 (APEHKQEQGVEHRQEPTQEHKQEEGQKQE) are compositionally biased toward basic and acidic residues. Residues 221–231 (EQEEEQEEEGK) show a composition bias toward acidic residues. Residues 232-243 (QEEGQGTKEGRE) show a composition bias toward basic and acidic residues. The segment at 319–427 (LPHTEALLVL…NQVGSPESGR (109 aa)) is pro-ACR binding.

Binds proacrosin (pro-ACR). Does not bind the mature form of ACR. Phosphorylated on Tyr residues in capacitated sperm. In terms of processing, the N-terminus is blocked. Post-translationally, synthesized as a 60-kDa precursor, the 32-kDa mature form is post-translationally produced by the removal of the N-terminal half of the precursor during sperm maturation in the testis and/or epididymis. As to expression, expression restricted to testis in normal tissue. Expressed in a wide spectrum of cancers, including bladder, breast, liver, lung and colon cancers.

It is found in the secreted. Its subcellular location is the cytoplasmic vesicle. The protein localises to the secretory vesicle. It localises to the acrosome. Functionally, acrosomal protein that maintains proacrosin (pro-ACR) as an enzymatically inactive zymogen in the acrosome. Involved also in the acrosome formation. This Homo sapiens (Human) protein is Acrosin-binding protein.